Consider the following 309-residue polypeptide: Homoserine kinase (309 aa).

91-101 (PIGSGLGSSAC) contributes to the ATP binding site.

The protein belongs to the GHMP kinase family. Homoserine kinase subfamily.

It localises to the cytoplasm. It catalyses the reaction L-homoserine + ATP = O-phospho-L-homoserine + ADP + H(+). The protein operates within amino-acid biosynthesis; L-threonine biosynthesis; L-threonine from L-aspartate: step 4/5. Its function is as follows. Catalyzes the ATP-dependent phosphorylation of L-homoserine to L-homoserine phosphate. In Pectobacterium atrosepticum (strain SCRI 1043 / ATCC BAA-672) (Erwinia carotovora subsp. atroseptica), this protein is Homoserine kinase.